The following is a 362-amino-acid chain: METTVRKQKKNLETKKTSIYSLQLHEMQDWLKEQGEPKFRAGQIFDWLYKKRVKNYEDMSNLSKGLREKLSNSFDITTLNTLVKQTSSDGTIKFLFQLYDGYSIETVLMRHEYGNSICVTTQVGCRIGCTFCASTLGGLKRNLEAGEIVAQVVEVQRALDESEERVSSLVVMGIGEPFDNYDNLMGFLRIINHEKGLHIGARHMTVSTSGIIPKIYKFAEEDLQINFAISLHAPNSELRSKLMPINRAYKLPDLMEAIKYYVNRTGRRITFEYGLFGGENDQVEHAEELAALLKGVKCHVNLIPVNYVPERDYVRTPREQIFLFEKTLKDRGVNVTIRREQGHDIDAACGQLRAKERKEETR.

E105 serves as the catalytic Proton acceptor. Positions 111–344 constitute a Radical SAM core domain; sequence HEYGNSICVT…VTIRREQGHD (234 aa). C118 and C349 are joined by a disulfide. Positions 125, 129, and 132 each coordinate [4Fe-4S] cluster. Residues 175–176, S207, 230–232, and N306 each bind S-adenosyl-L-methionine; these read GE and SLH. C349 serves as the catalytic S-methylcysteine intermediate.

It belongs to the radical SAM superfamily. RlmN family. It depends on [4Fe-4S] cluster as a cofactor.

It localises to the cytoplasm. The catalysed reaction is adenosine(2503) in 23S rRNA + 2 reduced [2Fe-2S]-[ferredoxin] + 2 S-adenosyl-L-methionine = 2-methyladenosine(2503) in 23S rRNA + 5'-deoxyadenosine + L-methionine + 2 oxidized [2Fe-2S]-[ferredoxin] + S-adenosyl-L-homocysteine. It catalyses the reaction adenosine(37) in tRNA + 2 reduced [2Fe-2S]-[ferredoxin] + 2 S-adenosyl-L-methionine = 2-methyladenosine(37) in tRNA + 5'-deoxyadenosine + L-methionine + 2 oxidized [2Fe-2S]-[ferredoxin] + S-adenosyl-L-homocysteine. Specifically methylates position 2 of adenine 2503 in 23S rRNA and position 2 of adenine 37 in tRNAs. The sequence is that of Probable dual-specificity RNA methyltransferase RlmN from Bacillus thuringiensis subsp. konkukian (strain 97-27).